The sequence spans 96 residues: Protein Vpr (96 aa).

The tract at residues 1–42 (MEQAPEDQGPQREPNNEWTLEILEELKREAVRHFPRPWLHNL) is homooligomerization. Residues S79, S94, and S96 each carry the phosphoserine; by host modification.

Belongs to the HIV-1 VPR protein family. In terms of assembly, homooligomer, may form homodimer. Interacts with p6-gag region of the Pr55 Gag precursor protein through a (Leu-X-X)4 motif near the C-terminus of the P6gag protein. Interacts with host UNG. May interact with host RAD23A/HHR23A. Interacts with host VPRBP/DCAF1, leading to hijack the CUL4A-RBX1-DDB1-DCAF1/VPRBP complex, mediating ubiquitination of host proteins such as TERT and ZGPAT and arrest of the cell cycle in G2 phase. Phosphorylated on several residues by host. These phosphorylations regulate VPR activity for the nuclear import of the HIV-1 pre-integration complex.

It is found in the virion. The protein localises to the host nucleus. Its subcellular location is the host extracellular space. During virus replication, may deplete host UNG protein, and incude G2-M cell cycle arrest. Acts by targeting specific host proteins for degradation by the 26S proteasome, through association with the cellular CUL4A-DDB1 E3 ligase complex by direct interaction with host VPRPB/DCAF-1. Cell cycle arrest reportedly occurs within hours of infection and is not blocked by antiviral agents, suggesting that it is initiated by the VPR carried into the virion. Additionally, VPR induces apoptosis in a cell cycle dependent manner suggesting that these two effects are mechanistically linked. Detected in the serum and cerebrospinal fluid of AIDS patient, VPR may also induce cell death to bystander cells. Functionally, during virus entry, plays a role in the transport of the viral pre-integration (PIC) complex to the host nucleus. This function is crucial for viral infection of non-dividing macrophages. May act directly at the nuclear pore complex, by binding nucleoporins phenylalanine-glycine (FG)-repeat regions. This is Protein Vpr from Human immunodeficiency virus type 1 group M subtype K (isolate 96CM-MP535) (HIV-1).